Here is a 312-residue protein sequence, read N- to C-terminus: DNA-directed RNA polymerase subunit alpha (312 aa).

Residues methionine 1–aspartate 226 are alpha N-terminal domain (alpha-NTD). An alpha C-terminal domain (alpha-CTD) region spans residues lysine 243–aspartate 312.

The protein belongs to the RNA polymerase alpha chain family. Homodimer. The RNAP catalytic core consists of 2 alpha, 1 beta, 1 beta' and 1 omega subunit. When a sigma factor is associated with the core the holoenzyme is formed, which can initiate transcription.

The enzyme catalyses RNA(n) + a ribonucleoside 5'-triphosphate = RNA(n+1) + diphosphate. In terms of biological role, DNA-dependent RNA polymerase catalyzes the transcription of DNA into RNA using the four ribonucleoside triphosphates as substrates. This Lactobacillus delbrueckii subsp. bulgaricus (strain ATCC BAA-365 / Lb-18) protein is DNA-directed RNA polymerase subunit alpha.